The following is a 255-amino-acid chain: AA9 family lytic polysaccharide monooxygenase D (255 aa).

Positions 1–19 are cleaved as a signal peptide; it reads MYRTLGSIALLAGGAAAHG. Residues His-18 and His-92 each contribute to the Cu(2+) site. Cystine bridges form between Cys-65–Cys-189 and Cys-104–Cys-111. A glycan (N-linked (GlcNAc...) asparagine) is linked at Asn-152. 2 residues coordinate O2: His-178 and Gln-184. Cu(2+) is bound at residue Tyr-186. An N-linked (GlcNAc...) asparagine glycan is attached at Asn-220.

It belongs to the polysaccharide monooxygenase AA9 family. Cu(2+) serves as cofactor.

It is found in the secreted. It catalyses the reaction [(1-&gt;4)-beta-D-glucosyl]n+m + reduced acceptor + O2 = 4-dehydro-beta-D-glucosyl-[(1-&gt;4)-beta-D-glucosyl]n-1 + [(1-&gt;4)-beta-D-glucosyl]m + acceptor + H2O.. In terms of biological role, lytic polysaccharide monooxygenase (LPMO) that depolymerizes crystalline and amorphous polysaccharides via the oxidation of scissile alpha- or beta-(1-4)-glycosidic bonds, yielding specifically C1 oxidation product. Catalysis by LPMOs requires the reduction of the active-site copper from Cu(II) to Cu(I) by a reducing agent and H(2)O(2) or O(2) as a cosubstrate. Is active on regenerated amorphous cellulose (RAC) in the presence of ascorbic acid or 3-methylcatechol. Also acts on phosphoric acid swollen cellulose (PASC) as a substrate. In Thermothelomyces thermophilus (strain ATCC 42464 / BCRC 31852 / DSM 1799) (Sporotrichum thermophile), this protein is AA9 family lytic polysaccharide monooxygenase D.